The following is a 152-amino-acid chain: Large ribosomal subunit protein uL15 (152 aa).

The interval 1–57 (MTSTLNTLKSNSGSRKKKLRKGRGIAAGQGASCGFGMRGQKSRSGRPTRPGFEGGQM) is disordered. Positions 14–23 (SRKKKLRKGR) are enriched in basic residues. Residues 25–37 (IAAGQGASCGFGM) are compositionally biased toward gly residues.

The protein belongs to the universal ribosomal protein uL15 family. In terms of assembly, part of the 50S ribosomal subunit.

Functionally, binds to the 23S rRNA. This chain is Large ribosomal subunit protein uL15, found in Prochlorococcus marinus (strain AS9601).